The following is a 93-amino-acid chain: Protein F-93 (93 aa).

In terms of assembly, homodimer.

Functionally, probable transcription factor that recognizes a (pseudo-)palindromic DNA target sequence. The sequence is that of Protein F-93 from Saccharolobus solfataricus (Sulfolobus solfataricus).